The following is a 230-amino-acid chain: Orotidine 5'-phosphate decarboxylase (230 aa).

Residues D16, K38, 65-74 (DLKLHDIGNT), T119, R180, Q189, G209, and R210 contribute to the substrate site. The active-site Proton donor is K67.

It belongs to the OMP decarboxylase family. Type 1 subfamily. Homodimer.

The enzyme catalyses orotidine 5'-phosphate + H(+) = UMP + CO2. It participates in pyrimidine metabolism; UMP biosynthesis via de novo pathway; UMP from orotate: step 2/2. Catalyzes the decarboxylation of orotidine 5'-monophosphate (OMP) to uridine 5'-monophosphate (UMP). This chain is Orotidine 5'-phosphate decarboxylase, found in Methylobacterium radiotolerans (strain ATCC 27329 / DSM 1819 / JCM 2831 / NBRC 15690 / NCIMB 10815 / 0-1).